We begin with the raw amino-acid sequence, 184 residues long: Ribosome maturation factor RimM (184 aa).

A PRC barrel domain is found at 105-184; it reads EDEFYWRELF…RIEVDWDPAF (80 aa).

It belongs to the RimM family. Binds ribosomal protein uS19.

The protein resides in the cytoplasm. Its function is as follows. An accessory protein needed during the final step in the assembly of 30S ribosomal subunit, possibly for assembly of the head region. Essential for efficient processing of 16S rRNA. May be needed both before and after RbfA during the maturation of 16S rRNA. It has affinity for free ribosomal 30S subunits but not for 70S ribosomes. This is Ribosome maturation factor RimM from Vibrio cholerae serotype O1 (strain ATCC 39541 / Classical Ogawa 395 / O395).